The primary structure comprises 328 residues: Malate dehydrogenase (328 aa).

11–17 (GAAGQIG) is an NAD(+) binding site. Positions 94 and 100 each coordinate substrate. Residues N107, Q114, and 131 to 133 (VGN) each bind NAD(+). Positions 133 and 164 each coordinate substrate. H189 (proton acceptor) is an active-site residue.

It belongs to the LDH/MDH superfamily. MDH type 2 family.

It catalyses the reaction (S)-malate + NAD(+) = oxaloacetate + NADH + H(+). In terms of biological role, catalyzes the reversible oxidation of malate to oxaloacetate. The sequence is that of Malate dehydrogenase from Xanthomonas euvesicatoria pv. vesicatoria (strain 85-10) (Xanthomonas campestris pv. vesicatoria).